A 160-amino-acid chain; its full sequence is Cyclic pyranopterin monophosphate synthase (160 aa).

Substrate contacts are provided by residues 74 to 76 (LSH) and 112 to 113 (ME). Asp-127 is a catalytic residue.

It belongs to the MoaC family. In terms of assembly, homohexamer; trimer of dimers.

The catalysed reaction is (8S)-3',8-cyclo-7,8-dihydroguanosine 5'-triphosphate = cyclic pyranopterin phosphate + diphosphate. It participates in cofactor biosynthesis; molybdopterin biosynthesis. In terms of biological role, catalyzes the conversion of (8S)-3',8-cyclo-7,8-dihydroguanosine 5'-triphosphate to cyclic pyranopterin monophosphate (cPMP). This chain is Cyclic pyranopterin monophosphate synthase, found in Pelobacter propionicus (strain DSM 2379 / NBRC 103807 / OttBd1).